Consider the following 280-residue polypeptide: Protoheme IX farnesyltransferase 2 (280 aa).

Transmembrane regions (helical) follow at residues 12 to 32 (VIWL…GGVD), 35 to 55 (LFSL…FNHY), 76 to 96 (LITP…GISL), 98 to 118 (FLLL…FYAV), 129 to 149 (WLNI…GYAL), 158 to 178 (AVLI…ALAF), 199 to 221 (ERAV…WLYL), 226 to 248 (GAGG…YAAV), and 255 to 275 (MWKM…ALMI).

This sequence belongs to the UbiA prenyltransferase family. Protoheme IX farnesyltransferase subfamily.

Its subcellular location is the cell membrane. It carries out the reaction heme b + (2E,6E)-farnesyl diphosphate + H2O = Fe(II)-heme o + diphosphate. It functions in the pathway porphyrin-containing compound metabolism; heme O biosynthesis; heme O from protoheme: step 1/1. Converts heme B (protoheme IX) to heme O by substitution of the vinyl group on carbon 2 of heme B porphyrin ring with a hydroxyethyl farnesyl side group. This Pyrobaculum aerophilum (strain ATCC 51768 / DSM 7523 / JCM 9630 / CIP 104966 / NBRC 100827 / IM2) protein is Protoheme IX farnesyltransferase 2.